Here is a 315-residue protein sequence, read N- to C-terminus: Thymidylate synthase (315 aa).

DUMP is bound by residues R22 and 177–178 (RR). C197 functions as the Nucleophile in the catalytic mechanism. Residues 217–220 (RSAD), N228, and 258–260 (HLY) contribute to the dUMP site. D220 contacts (6R)-5,10-methylene-5,6,7,8-tetrahydrofolate. A314 serves as a coordination point for (6R)-5,10-methylene-5,6,7,8-tetrahydrofolate.

It belongs to the thymidylate synthase family. Bacterial-type ThyA subfamily. In terms of assembly, homodimer.

The protein localises to the cytoplasm. The enzyme catalyses dUMP + (6R)-5,10-methylene-5,6,7,8-tetrahydrofolate = 7,8-dihydrofolate + dTMP. The protein operates within pyrimidine metabolism; dTTP biosynthesis. In terms of biological role, catalyzes the reductive methylation of 2'-deoxyuridine-5'-monophosphate (dUMP) to 2'-deoxythymidine-5'-monophosphate (dTMP) while utilizing 5,10-methylenetetrahydrofolate (mTHF) as the methyl donor and reductant in the reaction, yielding dihydrofolate (DHF) as a by-product. This enzymatic reaction provides an intracellular de novo source of dTMP, an essential precursor for DNA biosynthesis. This chain is Thymidylate synthase, found in Enterococcus faecalis (strain ATCC 700802 / V583).